A 49-amino-acid polypeptide reads, in one-letter code: Large ribosomal subunit protein eL40 (49 aa).

Belongs to the eukaryotic ribosomal protein eL40 family.

The protein is Large ribosomal subunit protein eL40 of Haloquadratum walsbyi (strain DSM 16790 / HBSQ001).